The sequence spans 456 residues: D-glycerate 3-kinase, chloroplastic (456 aa).

Residues 1-63 constitute a chloroplast transit peptide; it reads MAVAISGSSL…KFNDHVVNPS (63 aa). Residue 215–222 coordinates ATP; the sequence is APQGCGKT.

The protein belongs to the GLYK kinase family.

It is found in the plastid. It localises to the chloroplast. The protein resides in the cytoplasm. It catalyses the reaction (R)-glycerate + ATP = (2R)-3-phosphoglycerate + ADP + H(+). The protein operates within photosynthesis; photorespiration; 3-phospho-D-glycerate from glycine: step 4/4. In terms of biological role, catalyzes the concluding reaction of the photorespiratory C2 cycle, an indispensable ancillary metabolic pathway to the photosynthetic C3 cycle that enables land plants to grow in an oxygen-containing atmosphere. Cytoplasmic D-glycerate 3-kinase that constitutes a photorespiratory bypass that alleviates fluctuating light-induced photoinhibition. This chain is D-glycerate 3-kinase, chloroplastic, found in Arabidopsis thaliana (Mouse-ear cress).